Consider the following 318-residue polypeptide: Vomeronasal type-1 receptor 45 (318 aa).

The Extracellular segment spans residues 1–32; it reads MSEILFFSPQPLFSHMMNKNSRLHTHSNIKNT. The helical transmembrane segment at 33 to 53 threads the bilayer; sequence FFSEIGIGILGNSFLLLFHIL. Residues 54–65 are Cytoplasmic-facing; sequence KFIRGHRLRLTD. Residues 66–86 form a helical membrane-spanning segment; sequence LPIGLLSLIHLLMLLLMAFIA. Residues 87–109 are Extracellular-facing; the sequence is TDIFISRRGWDDIICKFLVYLYR. Cysteine 101 and cysteine 188 form a disulfide bridge. Residues 110 to 130 form a helical membrane-spanning segment; it reads VLRGLSLCTTSMLSVLQAIIL. The Cytoplasmic portion of the chain corresponds to 131–150; it reads SPRSSCLAKLKHKYPHHISC. A helical transmembrane segment spans residues 151–171; that stretch reads AIIFLSVLYMLISSHILLSII. The Extracellular segment spans residues 172 to 206; sequence ATPNLTRNDFLYVTQSCSILPLSYVMQSMYSTLLA. N-linked (GlcNAc...) asparagine glycosylation is present at asparagine 175. Residues 207-227 traverse the membrane as a helical segment; it reads LREVFLISLMVLSTLYMVVLL. The Cytoplasmic portion of the chain corresponds to 228–254; it reads CRHRKQAQHLQGTSLSPKASAEQRATQ. Residues 255–275 traverse the membrane as a helical segment; the sequence is TILMLMTFFVLMSIFDSIVSC. The Extracellular segment spans residues 276 to 285; the sequence is SRTMFLDDPT. Residues 286-306 form a helical membrane-spanning segment; sequence SYSIHIFVMHIYATVSPFVFM. The Cytoplasmic segment spans residues 307 to 318; sequence STEKHIVNILRG.

Belongs to the G-protein coupled receptor 1 family. Expressed in a subset of sensory neurons located in the apical layer of the vomeronasal organ.

The protein localises to the cell membrane. Putative pheromone receptor implicated in the regulation of social and reproductive behavior. In Mus musculus (Mouse), this protein is Vomeronasal type-1 receptor 45 (Vmn1r45).